Here is a 628-residue protein sequence, read N- to C-terminus: Modular serine protease (628 aa).

The signal sequence occupies residues 1–25; that stretch reads MQLISFLSNPLFFCALLLKFRTIFA. LDL-receptor class A domains follow at residues 26–64, 69–107, 122–163, and 166–204; these read ACDS…LTCV, HCTK…LRCG, NCKE…ELCG, and ECPA…LLCN. 12 disulfides stabilise this stretch: C27–C39, C34–C52, C46–C63, C70–C82, C77–C95, C89–C106, C123–C135, C130–C149, C143–C162, C167–C179, C174–C192, and C186–C203. N36 carries N-linked (GlcNAc...) asparagine glycosylation. The N-linked (GlcNAc...) asparagine glycan is linked to N204. 2 consecutive Sushi domains span residues 222 to 285 and 300 to 356; these read LGCP…KCVK and ALCT…RCEQ. Intrachain disulfides connect C224/C270, C256/C283, C302/C341, and C326/C354. A Peptidase S1 domain is found at 369–621; that stretch reads SSGGYTINNT…FEDMILNAMN (253 aa). N376 carries an N-linked (GlcNAc...) asparagine glycan. Residues C399 and C415 are joined by a disulfide bond. Active-site charge relay system residues include H414, D472, and S563. N621 is a glycosylation site (N-linked (GlcNAc...) asparagine).

This sequence belongs to the peptidase S1 family. May be proteolytically cleaved via an autocatalytic mechanism.

Its subcellular location is the secreted. Functionally, serine protease that plays a key role in innate immunity by activating the Toll pathway in response to infection with Gram-positive bacteria and fungi. During Gram-positive infection, acts downstream of PGRP-SA and upstream of Grass and Spz, and therefore appears to function in a pathway that links detection of Gram-positive lysine-type peptidoglycans to Toll activation. Functions in a separate pathway to the psh-mediated activation of the Toll pathway. The protein is Modular serine protease of Drosophila melanogaster (Fruit fly).